A 561-amino-acid polypeptide reads, in one-letter code: Carbohydrate sulfotransferase 15 (561 aa).

The Cytoplasmic portion of the chain corresponds to 1–80 (MRHCINCCVQ…FLRFRKGKRC (80 aa)). Residues 81–101 (SLVFGLIIMTLVMASYILSGA) traverse the membrane as a helical; Signal-anchor for type II membrane protein segment. The Lumenal portion of the chain corresponds to 102–561 (HQELLISSPF…DDEAFAWKTT (460 aa)). Residue 263–267 (KCGTT) participates in 3'-phosphoadenylyl sulfate binding. Asn-364 carries an N-linked (GlcNAc...) asparagine glycan. The 3'-phosphoadenylyl sulfate site is built by Arg-392 and Ser-400.

This sequence belongs to the sulfotransferase 1 family. As to quaternary structure, homodimer; disulfide-linked (Potential). The relevance of homodimerization is however unsure. May interact with phosphorylated proteins in resting B-cells, including HCK. A divalent metal cation serves as cofactor. It depends on glutathione as a cofactor. Glycosylated.

It is found in the golgi apparatus membrane. The enzyme catalyses dermatan 4'-sulfate + n 3'-phosphoadenylyl sulfate = dermatan 4',6'-bissulfate + n adenosine 3',5'-bisphosphate + n H(+). It catalyses the reaction chondroitin 4'-sulfate + n 3'-phosphoadenylyl sulfate = chondroitin 4',6'-bissulfate + n adenosine 3',5'-bisphosphate + n H(+). Its activity is regulated as follows. Inhibited by phenyl beta-GalNAc(4,6-SO(4)). Sulfotransferase that transfers sulfate from 3'-phosphoadenosine 5'-phosphosulfate (PAPS) to the C-6 hydroxyl group of the GalNAc 4-sulfate residue of chondroitin sulfate A and forms chondroitin sulfate E containing GlcA-GalNAc(4,6-SO(4)) repeating units. It also transfers sulfate to a unique non-reducing terminal sequence, GalNAc(4SO4)-GlcA(2SO4)-GalNAc(6SO4), to yield a highly sulfated structure similar to the structure found in thrombomodulin chondroitin sulfate. May also act as a B-cell receptor involved in BCR ligation-mediated early activation that mediate regulatory signals key to B-cell development and/or regulation of B-cell-specific RAG expression; however such results are unclear in vivo. This Mus musculus (Mouse) protein is Carbohydrate sulfotransferase 15 (Chst15).